The primary structure comprises 85 residues: MPRPALRSRSLRRIYVKLPSGKTAIHYERKKNDIPKCAMCKKPLHGVKTNFLHKYGKSEKRPERPFGGYLCSSCLAQLIKAMVRQ.

The protein belongs to the eukaryotic ribosomal protein eL34 family.

The chain is Large ribosomal subunit protein eL34 from Saccharolobus islandicus (strain M.16.27) (Sulfolobus islandicus).